The chain runs to 58 residues: Putative calcium channel toxin 196 (58 aa).

Positions 1–16 (GSLLLVLFLLSVICYA) are cleaved as a signal peptide. Positions 17–26 (EIAAGPTKCQ) are excised as a propeptide. 3 disulfide bridges follow: Cys-25–Cys-38, Cys-31–Cys-43, and Cys-37–Cys-52.

This sequence belongs to the scorpion calcin-like family. KTX subfamily. As to expression, expressed by the venom gland.

Its subcellular location is the secreted. May inhibit voltage-gated potassium channels Kv1.1/KCNA1, hKv1.2/KCNA2, and Kv1.3/KCNA3. May also increase intracellular calcium release through the activation of nuclear inositol 1,4,5-trisphosphate receptors (ITPR) of cardiomyocytes, thereby causing an increase in the contraction frequency of these cells. The sequence is that of Putative calcium channel toxin 196 from Lychas mucronatus (Chinese swimming scorpion).